A 420-amino-acid polypeptide reads, in one-letter code: Glycogen synthase kinase-3 beta (420 aa).

Over residues Met1–Ala22 the composition is skewed to polar residues. The segment at Met1–Glu53 is disordered. Ser9 is subject to Phosphoserine; by PKB/AKT1, RPS6KA3 and SGK3. A lipid anchor (S-palmitoyl cysteine) is attached at Cys14. Positions Tyr56 to Phe340 constitute a Protein kinase domain. ATP-binding positions include Ile62–Val70 and Lys85. The Proton acceptor role is filled by Asp181. The residue at position 216 (Tyr216) is a Phosphotyrosine. The segment at Gln385–Thr420 is disordered. 2 stretches are compositionally biased toward low complexity: residues Ala386–Asn401 and Asn409–Thr420. Ser389 carries the phosphoserine modification.

It belongs to the protein kinase superfamily. CMGC Ser/Thr protein kinase family. GSK-3 subfamily. In terms of assembly, monomer. Interacts with DAB2IP (via C2 domain); the interaction stimulates GSK3B kinase activation. Interacts (via C2 domain) with PPP2CA. Interacts with ARRB2, AXIN1, CABYR, DISC1, MMP2, MUC1, NIN, PRUNE1 and ZBED3. Interacts with AXIN1; the interaction mediates hyperphosphorylation of CTNNB1 leading to its ubiquitination and destruction. Interacts with and phosphorylates SNAI1. Interacts with DNM1L (via a C-terminal domain). Found in a complex composed of MACF1, APC, AXIN1, CTNNB1 and GSK3B. Interacts with SGK3. Interacts with the CLOCK-BMAL1 heterodimer. Interacts with the BMAL1. Interacts with CTNND2. The complex composed, at least, of APC, CTNNB1 and GSK3B interacts with JPT1; the interaction requires the inactive form of GSK3B (phosphorylated at 'Ser-9'). Forms a complex composed of PRKAR2A or PRKAR2B, GSK3B and GSKIP through GSKIP interaction; facilitates PKA-induced phosphorylation and regulates GSK3B activity. Interacts with GSKIP. Interacts with GID8. Interacts with PIWIL2. Interacts with LMBR1L. Interacts with DDX3X. Interacts with BIRC2. Interacts with TNFRSF10B; TNFRSF10B stimulation inhibits GSK3B kinase activity. Found in a complex with SLC39A6, SLC39A10 and with GSK3B that controls NCAM1 phosphorylation. Interacts with PKP3 (via ARM repeats); the interaction may be involved in PKP3 protein degradation. In terms of processing, phosphorylated by AKT1 and ILK1. Upon insulin-mediated signaling, the activated PKB/AKT1 and RPS6KA3 protein kinases phosphorylate and deactivate GSK3B, resulting in the dephosphorylation and activation of GYS1. Activated by phosphorylation at Tyr-216. Inactivated by phosphorylation at Ser-9. Phosphorylated in a circadian manner in the hippocampus. Post-translationally, mono-ADP-ribosylation by PARP10 negatively regulates kinase activity. Palmitoylated. Palmitoylation by ZDHHC4 prevents AKT1-mediated phosphorylation.

Its subcellular location is the cytoplasm. The protein resides in the nucleus. The protein localises to the membrane. It localises to the cell membrane. It catalyses the reaction L-seryl-[tau protein] + ATP = O-phospho-L-seryl-[tau protein] + ADP + H(+). It carries out the reaction L-threonyl-[tau protein] + ATP = O-phospho-L-threonyl-[tau protein] + ADP + H(+). The enzyme catalyses L-seryl-[protein] + ATP = O-phospho-L-seryl-[protein] + ADP + H(+). The catalysed reaction is L-threonyl-[protein] + ATP = O-phospho-L-threonyl-[protein] + ADP + H(+). Its activity is regulated as follows. Activated by phosphorylation at Tyr-216. In response to insulin, inhibited by phosphorylation at Ser-9 by PKB/AKT1; phosphorylation at this site causes a conformational change, preventing access of substrates to the active site. Inhibited by IL22 treatment which also triggers phosphorylation at Ser-9, promoting inactivation. Inhibited by lithium. Its function is as follows. Constitutively active protein kinase that acts as a negative regulator in the hormonal control of glucose homeostasis, Wnt signaling and regulation of transcription factors and microtubules, by phosphorylating and inactivating glycogen synthase (GYS1 or GYS2), EIF2B, CTNNB1/beta-catenin, APC, AXIN1, DPYSL2/CRMP2, JUN, NFATC1/NFATC, MAPT/TAU and MACF1. Requires primed phosphorylation of the majority of its substrates. In skeletal muscle, contributes to insulin regulation of glycogen synthesis by phosphorylating and inhibiting GYS1 activity and hence glycogen synthesis. May also mediate the development of insulin resistance by regulating activation of transcription factors. Regulates protein synthesis by controlling the activity of initiation factor 2B (EIF2BE/EIF2B5) in the same manner as glycogen synthase. In Wnt signaling, GSK3B forms a multimeric complex with APC, AXIN1 and CTNNB1/beta-catenin and phosphorylates the N-terminus of CTNNB1 leading to its degradation mediated by ubiquitin/proteasomes. Phosphorylates JUN at sites proximal to its DNA-binding domain, thereby reducing its affinity for DNA. Phosphorylates NFATC1/NFATC on conserved serine residues promoting NFATC1/NFATC nuclear export, shutting off NFATC1/NFATC gene regulation, and thereby opposing the action of calcineurin. Phosphorylates MAPT/TAU on 'Thr-548', decreasing significantly MAPT/TAU ability to bind and stabilize microtubules. MAPT/TAU is the principal component of neurofibrillary tangles in Alzheimer disease. Plays an important role in ERBB2-dependent stabilization of microtubules at the cell cortex. Phosphorylates MACF1, inhibiting its binding to microtubules which is critical for its role in bulge stem cell migration and skin wound repair. Probably regulates NF-kappa-B (NFKB1) at the transcriptional level and is required for the NF-kappa-B-mediated anti-apoptotic response to TNF-alpha (TNF/TNFA). Negatively regulates replication in pancreatic beta-cells, resulting in apoptosis, loss of beta-cells and diabetes. Through phosphorylation of the anti-apoptotic protein MCL1, may control cell apoptosis in response to growth factors deprivation. Phosphorylates MUC1 in breast cancer cells, decreasing the interaction of MUC1 with CTNNB1/beta-catenin. Is necessary for the establishment of neuronal polarity and axon outgrowth. Phosphorylates MARK2, leading to inhibition of its activity. Phosphorylates SIK1 at 'Thr-182', leading to sustainment of its activity. Phosphorylates ZC3HAV1 which enhances its antiviral activity. Phosphorylates SNAI1, leading to its ubiquitination and proteasomal degradation. Phosphorylates SFPQ at 'Thr-687' upon T-cell activation. Phosphorylates NR1D1 st 'Ser-55' and 'Ser-59' and stabilizes it by protecting it from proteasomal degradation. Regulates the circadian clock via phosphorylation of the major clock components including BMAL1, CLOCK and PER2. Phosphorylates CLOCK AT 'Ser-427' and targets it for proteasomal degradation. Phosphorylates BMAL1 at 'Ser-17' and 'Ser-21' and primes it for ubiquitination and proteasomal degradation. Phosphorylates FBXL2 at 'Thr-404' and primes it for ubiquitination by the SCF(FBXO3) complex and proteasomal degradation. Phosphorylates OGT at 'Ser-3' or 'Ser-4' which positively regulates its activity. Phosphorylates MYCN in neuroblastoma cells which may promote its degradation. Regulates the circadian rhythmicity of hippocampal long-term potentiation and BMAL1 and PER2 expression. Acts as a regulator of autophagy by mediating phosphorylation of KAT5/TIP60 under starvation conditions, activating KAT5/TIP60 acetyltransferase activity and promoting acetylation of key autophagy regulators, such as ULK1 and RUBCNL/Pacer. Negatively regulates extrinsic apoptotic signaling pathway via death domain receptors. Promotes the formation of an anti-apoptotic complex, made of DDX3X, BRIC2 and GSK3B, at death receptors, including TNFRSF10B. The anti-apoptotic function is most effective with weak apoptotic signals and can be overcome by stronger stimulation. Phosphorylates E2F1, promoting the interaction between E2F1 and USP11, stabilizing E2F1 and promoting its activity. Phosphorylates mTORC2 complex component RICTOR at 'Ser-1235' in response to endoplasmic stress, inhibiting mTORC2. Phosphorylates FXR1, promoting FXR1 ubiquitination by the SCF(FBXO4) complex and FXR1 degradation by the proteasome. Phosphorylates interleukin-22 receptor subunit IL22RA1, preventing its proteasomal degradation. This Rattus norvegicus (Rat) protein is Glycogen synthase kinase-3 beta.